The chain runs to 366 residues: Palmitoyltransferase ZDHHC2 (366 aa).

The Cytoplasmic segment spans residues 1–15; sequence MAPSGPGGVRRRCRR. A helical transmembrane segment spans residues 16 to 36; that stretch reads VLYWIPVVFISLLLGWSYYAY. The Lumenal portion of the chain corresponds to 37 to 47; sequence AIQLCIVSMEN. A helical membrane pass occupies residues 48-68; it reads IGEQVVCLMAYHLLFAMFVWS. Over 69-169 the chain is Cytoplasmic; sequence YWKTIFTLPM…NNCVGFSNYK (101 aa). Residues 126–176 form the DHHC domain; that stretch reads RYCDRCRLIKPDRCHHCSVCDKCILKMDHHCPWVNNCVGFSNYKFFLLFLA. Cys-156 serves as the catalytic S-palmitoyl cysteine intermediate. The chain crosses the membrane as a helical span at residues 170 to 190; that stretch reads FFLLFLAYSLLYCLFIAATDL. Over 191 to 207 the chain is Lumenal; the sequence is QYFIRFWTNGLPDTQAK. A helical transmembrane segment spans residues 208–228; the sequence is FHIMFLFFAAAMFSVSLSSLF. The Cytoplasmic segment spans residues 229–366; sequence GYHCWLVSKN…NPALTMENET (138 aa). Polar residues-rich tracts occupy residues 297–316 and 332–349; these read VNQD…TAKN and SHLL…SNSG. A disordered region spans residues 297-366; sequence VNQDPEQPST…NPALTMENET (70 aa). Residues 298 to 366 are mediates localization to plasma membrane and recycling endosomes; sequence NQDPEQPSTP…NPALTMENET (69 aa). Residues 334–335 carry the Non-canonical dileucine endocytic signal motif; sequence LL. The short motif at 357–360 is the NPxY-like endocytic signal element; that stretch reads NPAL.

This sequence belongs to the DHHC palmitoyltransferase family. Monomer. Homodimer. The monomeric form has a higher catalytic activity. Post-translationally, autopalmitoylated.

The protein resides in the postsynaptic density. The protein localises to the postsynaptic recycling endosome membrane. Its subcellular location is the cell membrane. It is found in the endoplasmic reticulum membrane. It localises to the golgi apparatus membrane. It catalyses the reaction L-cysteinyl-[protein] + hexadecanoyl-CoA = S-hexadecanoyl-L-cysteinyl-[protein] + CoA. It carries out the reaction L-cysteinyl-[protein] + tetradecanoyl-CoA = S-tetradecanoyl-L-cysteinyl-[protein] + CoA. The catalysed reaction is L-cysteinyl-[protein] + octadecanoyl-CoA = S-octadecanoyl-L-cysteinyl-[protein] + CoA. Palmitoyltransferase that catalyzes the addition of palmitate onto various protein substrates and is involved in a variety of cellular processes. Has no stringent fatty acid selectivity and in addition to palmitate can also transfer onto target proteins myristate from tetradecanoyl-CoA and stearate from octadecanoyl-CoA. In the nervous system, plays a role in long term synaptic potentiation by palmitoylating AKAP5 through which it regulates protein trafficking from the dendritic recycling endosomes to the plasma membrane and controls both structural and functional plasticity at excitatory synapses. In dendrites, mediates the palmitoylation of DLG4 when synaptic activity decreases and induces synaptic clustering of DLG4 and associated AMPA-type glutamate receptors. Also mediates the de novo and turnover palmitoylation of RGS7BP, a shuttle for Gi/o-specific GTPase-activating proteins/GAPs, promoting its localization to the plasma membrane in response to the activation of G protein-coupled receptors. Through the localization of these GTPase-activating proteins/GAPs, it also probably plays a role in G protein-coupled receptors signaling in neurons. Also probably plays a role in cell adhesion by palmitoylating CD9 and CD151 to regulate their expression and function. Palmitoylates the endoplasmic reticulum protein CKAP4 and regulates its localization to the plasma membrane. Could also palmitoylate LCK and regulate its localization to the plasma membrane. The sequence is that of Palmitoyltransferase ZDHHC2 from Rattus norvegicus (Rat).